The chain runs to 464 residues: Chitotriosidase-1 (464 aa).

A signal peptide spans 1-21 (MVQSLAWAGVMTLLMVQWGSA). The 365-residue stretch at 22-386 (AKLVCYLTNW…RTLRQELNLP (365 aa)) folds into the GH18 domain. Cys26 and Cys51 are oxidised to a cystine. Chitin is bound by residues 70 to 71 (EH) and 97 to 100 (GGWT). The Proton donor role is filled by Glu140. 210–213 (MAYD) is a chitin binding site. Cys307 and Cys368 are oxidised to a cystine. The segment at 385 to 416 (LPSETPRSPEQIIPEPRPSSMPEQGPSPGLDN) is disordered. Positions 415–464 (DNFCQGKADGVYPNPGDESTYYNCGGGRLFQQSCPPGLVFRASCKCCTWS) constitute a Chitin-binding type-2 domain. A disulfide bridge links Cys448 with Cys461.

Belongs to the glycosyl hydrolase 18 family. Chitinase class II subfamily. In terms of assembly, monomer. In terms of tissue distribution, highly expressed in tongue, stomach, kidney, brain, skin, testis, and bone marrow. Low level of expression was found in lung, heart, spleen, small intestine, and liver. Not detectable in pancreas, salivary gland, large intestine, uterus, or peripheral blood mononuclear cells (PBMC).

It is found in the secreted. Its subcellular location is the lysosome. The catalysed reaction is Random endo-hydrolysis of N-acetyl-beta-D-glucosaminide (1-&gt;4)-beta-linkages in chitin and chitodextrins.. Its function is as follows. Degrades chitin, chitotriose and chitobiose. May participate in the defense against nematodes and other pathogens. The protein is Chitotriosidase-1 (Chit1) of Mus musculus (Mouse).